A 231-amino-acid polypeptide reads, in one-letter code: Lipoprotein-releasing system ATP-binding protein LolD (231 aa).

Residues 11-231 (LQAEHLGKVY…HMENGRLQPD (221 aa)) form the ABC transporter domain. 47–54 (GASGSGKS) is a binding site for ATP.

It belongs to the ABC transporter superfamily. Lipoprotein translocase (TC 3.A.1.125) family. In terms of assembly, the complex is composed of two ATP-binding proteins (LolD) and two transmembrane proteins (LolC and LolE).

Its subcellular location is the cell inner membrane. Part of the ABC transporter complex LolCDE involved in the translocation of mature outer membrane-directed lipoproteins, from the inner membrane to the periplasmic chaperone, LolA. Responsible for the formation of the LolA-lipoprotein complex in an ATP-dependent manner. The polypeptide is Lipoprotein-releasing system ATP-binding protein LolD (Bordetella bronchiseptica (strain ATCC BAA-588 / NCTC 13252 / RB50) (Alcaligenes bronchisepticus)).